Here is a 309-residue protein sequence, read N- to C-terminus: GTPase Era (309 aa).

Positions 16–186 (HAGFVAIVGK…REQILDALPE (171 aa)) constitute an Era-type G domain. The tract at residues 24–31 (GKPNVGKS) is G1. 24-31 (GKPNVGKS) is a binding site for GTP. Residues 50–54 (QTTRR) are G2. The G3 stretch occupies residues 71–74 (DTPG). Residues 71-75 (DTPGL) and 133-136 (NKVD) contribute to the GTP site. Positions 133–136 (NKVD) are G4. Residues 164 to 166 (LSA) form a G5 region. One can recognise a KH type-2 domain in the interval 217–294 (LREELPYAVA…FLGLEVIVIP (78 aa)).

It belongs to the TRAFAC class TrmE-Era-EngA-EngB-Septin-like GTPase superfamily. Era GTPase family. Monomer.

The protein resides in the cytoplasm. It localises to the cell membrane. Its function is as follows. An essential GTPase that binds both GDP and GTP, with rapid nucleotide exchange. Plays a role in 16S rRNA processing and 30S ribosomal subunit biogenesis and possibly also in cell cycle regulation and energy metabolism. This is GTPase Era from Deinococcus geothermalis (strain DSM 11300 / CIP 105573 / AG-3a).